The primary structure comprises 384 residues: Geranylgeranyl pyrophosphate synthase (384 aa).

Disordered regions lie at residues Met1–Thr25 and Arg39–Tyr78. Over residues Leu47–Ile62 the composition is skewed to polar residues. Residues Lys112, Arg115, and His144 each contribute to the isopentenyl diphosphate site. Residues Asp151 and Asp155 each contribute to the Mg(2+) site. Residue Arg160 coordinates dimethylallyl diphosphate. Arg161 is an isopentenyl diphosphate binding site. Residues Lys238, Thr239, and Gln272 each coordinate dimethylallyl diphosphate. Asp275 serves as a coordination point for Mg(2+). 3 residues coordinate dimethylallyl diphosphate: Asn279, Lys289, and Lys299.

This sequence belongs to the FPP/GGPP synthase family. Mg(2+) is required as a cofactor.

The catalysed reaction is isopentenyl diphosphate + dimethylallyl diphosphate = (2E)-geranyl diphosphate + diphosphate. It carries out the reaction isopentenyl diphosphate + (2E)-geranyl diphosphate = (2E,6E)-farnesyl diphosphate + diphosphate. It catalyses the reaction isopentenyl diphosphate + (2E,6E)-farnesyl diphosphate = (2E,6E,10E)-geranylgeranyl diphosphate + diphosphate. It functions in the pathway secondary metabolite biosynthesis. Its function is as follows. Catalyzes the trans-addition of the 3 molecules of isopentenyl diphosphate (IPP) onto dimethylallyl diphosphate (DMAPP) to form geranylgeranyl pyrophosphate (GGPP). GGPP is a precursor for the biosynthesis of many secondary metabolites, including the indole diterpenes nodulisporic acids (NA). The polypeptide is Geranylgeranyl pyrophosphate synthase (Hypoxylon pulicicidum).